A 174-amino-acid polypeptide reads, in one-letter code: U-stichotoxin-Hau2a (174 aa).

An N-terminal signal peptide occupies residues 1–18 (MKPIFIVALLFSTCLVNA). The propeptide occupies 19–33 (KPSINDADIKREPEP). The residue at position 39 (Pro-39) is a Hydroxyproline. Disulfide bonds link Cys-40–Cys-51 and Cys-43–Cys-58. The propeptide occupies 61 to 67 (RKREPEP). Hydroxyproline is present on Pro-73. 2 cysteine pairs are disulfide-bonded: Cys-74–Cys-85 and Cys-77–Cys-92. Positions 95-101 (RKREPEP) are excised as a propeptide. Residue Pro-107 is modified to Hydroxyproline. Intrachain disulfides connect Cys-108–Cys-119 and Cys-111–Cys-126. Residues 129–135 (RKREPEP) constitute a propeptide that is removed on maturation. Pro-141 bears the Hydroxyproline mark. Intrachain disulfides connect Cys-142–Cys-153 and Cys-145–Cys-160. The propeptide occupies 163–174 (RKREPENQDLWS).

The protein belongs to the sea anemone BBH family.

The protein localises to the secreted. Its subcellular location is the nematocyst. In terms of biological role, neurotoxin that paralyzes freshwater crabs at high concentration. The protein is U-stichotoxin-Hau2a of Heteractis aurora (Banded sea anemone).